Reading from the N-terminus, the 156-residue chain is Small ribosomal subunit protein uS7 (156 aa).

This sequence belongs to the universal ribosomal protein uS7 family. As to quaternary structure, part of the 30S ribosomal subunit. Contacts proteins S9 and S11.

In terms of biological role, one of the primary rRNA binding proteins, it binds directly to 16S rRNA where it nucleates assembly of the head domain of the 30S subunit. Is located at the subunit interface close to the decoding center, probably blocks exit of the E-site tRNA. This chain is Small ribosomal subunit protein uS7, found in Levilactobacillus brevis (strain ATCC 367 / BCRC 12310 / CIP 105137 / JCM 1170 / LMG 11437 / NCIMB 947 / NCTC 947) (Lactobacillus brevis).